We begin with the raw amino-acid sequence, 316 residues long: HPr kinase/phosphorylase (316 aa).

Active-site residues include His146 and Lys167. Gly161–Ser168 lines the ATP pocket. Residue Ser168 participates in Mg(2+) binding. Asp185 serves as the catalytic Proton acceptor; for phosphorylation activity. Proton donor; for dephosphorylation activity. The interval Leu209–Asp218 is important for the catalytic mechanism of both phosphorylation and dephosphorylation. Residue Glu210 participates in Mg(2+) binding. Arg252 is an active-site residue. Residues Gln273 to Arg278 form an important for the catalytic mechanism of dephosphorylation region.

It belongs to the HPrK/P family. Homohexamer. Mg(2+) is required as a cofactor.

The catalysed reaction is [HPr protein]-L-serine + ATP = [HPr protein]-O-phospho-L-serine + ADP + H(+). It catalyses the reaction [HPr protein]-O-phospho-L-serine + phosphate + H(+) = [HPr protein]-L-serine + diphosphate. Catalyzes the ATP- as well as the pyrophosphate-dependent phosphorylation of a specific serine residue in HPr, a phosphocarrier protein of the phosphoenolpyruvate-dependent sugar phosphotransferase system (PTS). HprK/P also catalyzes the pyrophosphate-producing, inorganic phosphate-dependent dephosphorylation (phosphorolysis) of seryl-phosphorylated HPr (P-Ser-HPr). In Polaromonas naphthalenivorans (strain CJ2), this protein is HPr kinase/phosphorylase.